The primary structure comprises 155 residues: MYSRQLASCVALALVLLANSAPTSSPAKEAQQYLEQLLLDLQQLLRGINNYKNPKLPMLLTFKFYMPRKATELKHLQCLEEELGPLHDVLNLVQSKNLYLEDAGNFISNIRVTVMKLKGSENTLNCEFDDETVTVVEFLSRWITFCQSAISTMTQ.

The signal sequence occupies residues 1 to 20 (MYSRQLASCVALALVLLANS). A glycan (O-linked (GalNAc...) threonine) is linked at Thr23. Residues Cys78 and Cys126 are joined by a disulfide bond.

Belongs to the IL-2 family.

It is found in the secreted. Its function is as follows. Cytokine produced by activated CD4-positive helper T-cells and to a lesser extend activated CD8-positive T-cells and natural killer (NK) cells that plays pivotal roles in the immune response and tolerance. Binds to a receptor complex composed of either the high-affinity trimeric IL-2R (IL2RA/CD25, IL2RB/CD122 and IL2RG/CD132) or the low-affinity dimeric IL-2R (IL2RB and IL2RG). Interaction with the receptor leads to oligomerization and conformation changes in the IL-2R subunits resulting in downstream signaling starting with phosphorylation of JAK1 and JAK3. In turn, JAK1 and JAK3 phosphorylate the receptor to form a docking site leading to the phosphorylation of several substrates including STAT5. This process leads to activation of several pathways including STAT, phosphoinositide-3-kinase/PI3K and mitogen-activated protein kinase/MAPK pathways. Functions as a T-cell growth factor and can increase NK-cell cytolytic activity as well. Promotes strong proliferation of activated B-cells and subsequently immunoglobulin production. Plays a pivotal role in regulating the adaptive immune system by controlling the survival and proliferation of regulatory T-cells, which are required for the maintenance of immune tolerance. Moreover, participates in the differentiation and homeostasis of effector T-cell subsets, including Th1, Th2, Th17 as well as memory CD8-positive T-cells. This Meriones unguiculatus (Mongolian jird) protein is Interleukin-2 (IL2).